A 243-amino-acid polypeptide reads, in one-letter code: Segregation and condensation protein A (243 aa).

The protein belongs to the ScpA family. As to quaternary structure, component of a cohesin-like complex composed of ScpA, ScpB and the Smc homodimer, in which ScpA and ScpB bind to the head domain of Smc. The presence of the three proteins is required for the association of the complex with DNA.

The protein resides in the cytoplasm. In terms of biological role, participates in chromosomal partition during cell division. May act via the formation of a condensin-like complex containing Smc and ScpB that pull DNA away from mid-cell into both cell halves. This Thermoanaerobacter pseudethanolicus (strain ATCC 33223 / 39E) (Clostridium thermohydrosulfuricum) protein is Segregation and condensation protein A.